Here is a 165-residue protein sequence, read N- to C-terminus: Peptidyl-prolyl cis-trans isomerase-like 1 (165 aa).

The region spanning E3–N157 is the PPIase cyclophilin-type domain.

It belongs to the cyclophilin-type PPIase family. PPIL1 subfamily.

The enzyme catalyses [protein]-peptidylproline (omega=180) = [protein]-peptidylproline (omega=0). Its function is as follows. PPIases accelerate the folding of proteins. It catalyzes the cis-trans isomerization of proline imidic peptide bonds in oligopeptides. The chain is Peptidyl-prolyl cis-trans isomerase-like 1 (cyp3) from Rhizopus delemar (strain RA 99-880 / ATCC MYA-4621 / FGSC 9543 / NRRL 43880) (Mucormycosis agent).